A 450-amino-acid polypeptide reads, in one-letter code: Aspartyl/glutamyl-tRNA(Asn/Gln) amidotransferase subunit B (450 aa).

Belongs to the GatB/GatE family. GatB subfamily. In terms of assembly, heterotrimer of A, B and C subunits.

The enzyme catalyses L-glutamyl-tRNA(Gln) + L-glutamine + ATP + H2O = L-glutaminyl-tRNA(Gln) + L-glutamate + ADP + phosphate + H(+). The catalysed reaction is L-aspartyl-tRNA(Asn) + L-glutamine + ATP + H2O = L-asparaginyl-tRNA(Asn) + L-glutamate + ADP + phosphate + 2 H(+). In terms of biological role, allows the formation of correctly charged Asn-tRNA(Asn) or Gln-tRNA(Gln) through the transamidation of misacylated Asp-tRNA(Asn) or Glu-tRNA(Gln) in organisms which lack either or both of asparaginyl-tRNA or glutaminyl-tRNA synthetases. The reaction takes place in the presence of glutamine and ATP through an activated phospho-Asp-tRNA(Asn) or phospho-Glu-tRNA(Gln). This Methanobrevibacter smithii (strain ATCC 35061 / DSM 861 / OCM 144 / PS) protein is Aspartyl/glutamyl-tRNA(Asn/Gln) amidotransferase subunit B.